A 627-amino-acid chain; its full sequence is 1-deoxy-D-xylulose-5-phosphate synthase (627 aa).

Residues His-87 and 128-130 (GHS) contribute to the thiamine diphosphate site. Residue Asp-159 participates in Mg(2+) binding. Thiamine diphosphate contacts are provided by residues 160–161 (GA), Asn-188, Phe-295, and Glu-375. Asn-188 is a binding site for Mg(2+).

Belongs to the transketolase family. DXPS subfamily. As to quaternary structure, homodimer. Mg(2+) is required as a cofactor. Thiamine diphosphate serves as cofactor.

The enzyme catalyses D-glyceraldehyde 3-phosphate + pyruvate + H(+) = 1-deoxy-D-xylulose 5-phosphate + CO2. Its pathway is metabolic intermediate biosynthesis; 1-deoxy-D-xylulose 5-phosphate biosynthesis; 1-deoxy-D-xylulose 5-phosphate from D-glyceraldehyde 3-phosphate and pyruvate: step 1/1. Functionally, catalyzes the acyloin condensation reaction between C atoms 2 and 3 of pyruvate and glyceraldehyde 3-phosphate to yield 1-deoxy-D-xylulose-5-phosphate (DXP). This chain is 1-deoxy-D-xylulose-5-phosphate synthase, found in Pseudomonas paraeruginosa (strain DSM 24068 / PA7) (Pseudomonas aeruginosa (strain PA7)).